Consider the following 361-residue polypeptide: Chorismate synthase (361 aa).

Arg-48 and Arg-54 together coordinate NADP(+). Residues 125 to 127 (RSS), 238 to 239 (NA), Gly-278, 293 to 297 (KPTSS), and Arg-319 contribute to the FMN site.

The protein belongs to the chorismate synthase family. In terms of assembly, homotetramer. It depends on FMNH2 as a cofactor.

It carries out the reaction 5-O-(1-carboxyvinyl)-3-phosphoshikimate = chorismate + phosphate. The protein operates within metabolic intermediate biosynthesis; chorismate biosynthesis; chorismate from D-erythrose 4-phosphate and phosphoenolpyruvate: step 7/7. Its function is as follows. Catalyzes the anti-1,4-elimination of the C-3 phosphate and the C-6 proR hydrogen from 5-enolpyruvylshikimate-3-phosphate (EPSP) to yield chorismate, which is the branch point compound that serves as the starting substrate for the three terminal pathways of aromatic amino acid biosynthesis. This reaction introduces a second double bond into the aromatic ring system. This Escherichia coli O1:K1 / APEC protein is Chorismate synthase.